Consider the following 107-residue polypeptide: Thioredoxin 1 (107 aa).

Residues 2 to 107 (SVAAAVTDAT…TLANTLDKHL (106 aa)) enclose the Thioredoxin domain. The cysteines at positions 32 and 35 are disulfide-linked.

This sequence belongs to the thioredoxin family.

Its function is as follows. Participates in various redox reactions through the reversible oxidation of its active center dithiol to a disulfide and catalyzes dithiol-disulfide exchange reactions. This Synechococcus elongatus (strain ATCC 33912 / PCC 7942 / FACHB-805) (Anacystis nidulans R2) protein is Thioredoxin 1 (trxA).